Here is a 229-residue protein sequence, read N- to C-terminus: Transcriptional activator protein IrlR (229 aa).

Positions 2 to 115 (RILIVEDEPK…ELVARVRSIL (114 aa)) constitute a Response regulatory domain. Position 51 is a 4-aspartylphosphate (Asp-51). Positions 123-221 (STVLRIADLE…VRGMGYVLEV (99 aa)) form a DNA-binding region, ompR/PhoB-type.

Post-translationally, phosphorylated by IrlS.

Its function is as follows. Member of the two-component regulatory system IrlR/IrlS. May be involved in invasion of eukaryotic cells and heavy-metal resistance. The polypeptide is Transcriptional activator protein IrlR (irlR) (Burkholderia pseudomallei (strain 1026b)).